We begin with the raw amino-acid sequence, 137 residues long: Large ribosomal subunit protein uL16 (137 aa).

It belongs to the universal ribosomal protein uL16 family. As to quaternary structure, part of the 50S ribosomal subunit.

In terms of biological role, binds 23S rRNA and is also seen to make contacts with the A and possibly P site tRNAs. The sequence is that of Large ribosomal subunit protein uL16 from Methylococcus capsulatus (strain ATCC 33009 / NCIMB 11132 / Bath).